Reading from the N-terminus, the 288-residue chain is UTP--glucose-1-phosphate uridylyltransferase (288 aa).

This sequence belongs to the UDPGP type 2 family.

The enzyme catalyses alpha-D-glucose 1-phosphate + UTP + H(+) = UDP-alpha-D-glucose + diphosphate. The protein operates within glycolipid metabolism; diglucosyl-diacylglycerol biosynthesis. In terms of biological role, catalyzes the formation of UDP-glucose from glucose-1-phosphate and UTP. This is an intermediate step in the biosynthesis of diglucosyl-diacylglycerol (Glc2-DAG), i.e. the predominant glycolipid found in the S.aureus membrane, which is also used as a membrane anchor for lipoteichoic acid (LTA). This Staphylococcus aureus (strain USA300) protein is UTP--glucose-1-phosphate uridylyltransferase (gtaB).